The sequence spans 311 residues: Urease accessory protein UreD (311 aa).

It belongs to the UreD family. UreD, UreF and UreG form a complex that acts as a GTP-hydrolysis-dependent molecular chaperone, activating the urease apoprotein by helping to assemble the nickel containing metallocenter of UreC. The UreE protein probably delivers the nickel.

It is found in the cytoplasm. In terms of biological role, required for maturation of urease via the functional incorporation of the urease nickel metallocenter. In Synechococcus sp. (strain CC9902), this protein is Urease accessory protein UreD.